The primary structure comprises 314 residues: 4-hydroxy-3-methylbut-2-enyl diphosphate reductase (314 aa).

Cys12 serves as a coordination point for [4Fe-4S] cluster. (2E)-4-hydroxy-3-methylbut-2-enyl diphosphate is bound by residues His41 and His74. Residues His41 and His74 each contribute to the dimethylallyl diphosphate site. His41 and His74 together coordinate isopentenyl diphosphate. Cys96 serves as a coordination point for [4Fe-4S] cluster. His124 serves as a coordination point for (2E)-4-hydroxy-3-methylbut-2-enyl diphosphate. His124 contributes to the dimethylallyl diphosphate binding site. His124 is a binding site for isopentenyl diphosphate. The active-site Proton donor is Glu126. Thr167 contacts (2E)-4-hydroxy-3-methylbut-2-enyl diphosphate. Cys197 lines the [4Fe-4S] cluster pocket. Ser225, Ser226, Asn227, and Ser269 together coordinate (2E)-4-hydroxy-3-methylbut-2-enyl diphosphate. 4 residues coordinate dimethylallyl diphosphate: Ser225, Ser226, Asn227, and Ser269. Isopentenyl diphosphate contacts are provided by Ser225, Ser226, Asn227, and Ser269.

The protein belongs to the IspH family. It depends on [4Fe-4S] cluster as a cofactor.

The enzyme catalyses isopentenyl diphosphate + 2 oxidized [2Fe-2S]-[ferredoxin] + H2O = (2E)-4-hydroxy-3-methylbut-2-enyl diphosphate + 2 reduced [2Fe-2S]-[ferredoxin] + 2 H(+). It carries out the reaction dimethylallyl diphosphate + 2 oxidized [2Fe-2S]-[ferredoxin] + H2O = (2E)-4-hydroxy-3-methylbut-2-enyl diphosphate + 2 reduced [2Fe-2S]-[ferredoxin] + 2 H(+). It functions in the pathway isoprenoid biosynthesis; dimethylallyl diphosphate biosynthesis; dimethylallyl diphosphate from (2E)-4-hydroxy-3-methylbutenyl diphosphate: step 1/1. Its pathway is isoprenoid biosynthesis; isopentenyl diphosphate biosynthesis via DXP pathway; isopentenyl diphosphate from 1-deoxy-D-xylulose 5-phosphate: step 6/6. Its function is as follows. Catalyzes the conversion of 1-hydroxy-2-methyl-2-(E)-butenyl 4-diphosphate (HMBPP) into a mixture of isopentenyl diphosphate (IPP) and dimethylallyl diphosphate (DMAPP). Acts in the terminal step of the DOXP/MEP pathway for isoprenoid precursor biosynthesis. This chain is 4-hydroxy-3-methylbut-2-enyl diphosphate reductase, found in Haemophilus ducreyi (strain 35000HP / ATCC 700724).